The chain runs to 420 residues: Tyrosine--tRNA ligase (420 aa).

Tyr36 contributes to the L-tyrosine binding site. Residues Pro41–His50 carry the 'HIGH' region motif. The L-tyrosine site is built by Tyr170 and Gln174. The 'KMSKS' region motif lies at Lys231–Ser235. Lys234 contacts ATP. In terms of domain architecture, S4 RNA-binding spans Thr353 to Gln420.

It belongs to the class-I aminoacyl-tRNA synthetase family. TyrS type 1 subfamily. Homodimer.

The protein localises to the cytoplasm. It catalyses the reaction tRNA(Tyr) + L-tyrosine + ATP = L-tyrosyl-tRNA(Tyr) + AMP + diphosphate + H(+). Functionally, catalyzes the attachment of tyrosine to tRNA(Tyr) in a two-step reaction: tyrosine is first activated by ATP to form Tyr-AMP and then transferred to the acceptor end of tRNA(Tyr). This Staphylococcus aureus (strain COL) protein is Tyrosine--tRNA ligase.